Here is a 274-residue protein sequence, read N- to C-terminus: Prothoracicostatic peptide (274 aa).

The N-terminal stretch at 1–19 (MRWCLFALWVFGVATVVTA) is a signal peptide. A propeptide spanning residues 20–67 (AEEPHHDAAPQTDNEVDLTEDDKRAWSSLHSGWAKRAWQDMSSAWGKR) is cleaved from the precursor. Trp-76 carries the tryptophan amide modification. The propeptide occupies 77 to 91 (GKRGWQDLNSAWGKR). Residue Trp-100 is modified to Tryptophan amide. Residues 101 to 136 (GKRGWQDLNSAWGKRDDDEAMEKKSWQDLNSVWGKR) constitute a propeptide that is removed on maturation. The residue at position 145 (Trp-145) is a Tryptophan amide. Residues 146–148 (GKR) constitute a propeptide that is removed on maturation. Trp-157 is modified (tryptophan amide). A propeptide spanning residues 158–172 (GKRGWNDISSVWGKR) is cleaved from the precursor. Position 181 is a tryptophan amide (Trp-181). A propeptide spanning residues 182–274 (GKRAWQDMSS…NEHSATTNEA (93 aa)) is cleaved from the precursor.

The protein resides in the secreted. Functionally, inhibits ecdysteroid biosynthesis in the prothoracic gland of fifth instar larvae, with maximum inhibition during the spinning stage. When administered to day 8 fifth instar larvae it produces a significant delay in the commencement spinning behavior. The sequence is that of Prothoracicostatic peptide from Bombyx mori (Silk moth).